The chain runs to 463 residues: ATP synthase subunit beta (463 aa).

152–159 (GGAGVGKT) is a binding site for ATP.

It belongs to the ATPase alpha/beta chains family. In terms of assembly, F-type ATPases have 2 components, CF(1) - the catalytic core - and CF(0) - the membrane proton channel. CF(1) has five subunits: alpha(3), beta(3), gamma(1), delta(1), epsilon(1). CF(0) has three main subunits: a(1), b(2) and c(9-12). The alpha and beta chains form an alternating ring which encloses part of the gamma chain. CF(1) is attached to CF(0) by a central stalk formed by the gamma and epsilon chains, while a peripheral stalk is formed by the delta and b chains.

It is found in the cell inner membrane. The catalysed reaction is ATP + H2O + 4 H(+)(in) = ADP + phosphate + 5 H(+)(out). In terms of biological role, produces ATP from ADP in the presence of a proton gradient across the membrane. The catalytic sites are hosted primarily by the beta subunits. This chain is ATP synthase subunit beta, found in Shewanella sp. (strain ANA-3).